The sequence spans 81 residues: U-poneritoxin(01)-Om6a (81 aa).

Positions 1–21 (MRRSYVLLAFAIVLIISIISA) are cleaved as a signal peptide. The propeptide occupies 22–43 (QVEADASSDAFADAVADAVADP). The residue at position 79 (A79) is an Alanine amide.

The protein belongs to the formicidae venom precursor-01 superfamily. Truncated sequences of this peptide have also been found in the venom. It is possible they have been cleaved in the venom. Expressed by the venom gland.

It is found in the secreted. Its function is as follows. Cationic amphipathic alpha-helical peptide with antimicrobial activities against E.coli (MIC=3.1), and S.aureus (MIC=3.1 uM). Also shows histamine-releasing activity (33.6% at 10 uM). Does not have activity against S.cerevisiae. Does not show hemolytic activity, even at 50 uM. The polypeptide is U-poneritoxin(01)-Om6a (Odontomachus monticola (Trap-jaw ant)).